The following is an 86-amino-acid chain: Small ribosomal subunit protein uS17 (86 aa).

It belongs to the universal ribosomal protein uS17 family. As to quaternary structure, part of the 30S ribosomal subunit.

Functionally, one of the primary rRNA binding proteins, it binds specifically to the 5'-end of 16S ribosomal RNA. The polypeptide is Small ribosomal subunit protein uS17 (Nitrosococcus oceani (strain ATCC 19707 / BCRC 17464 / JCM 30415 / NCIMB 11848 / C-107)).